The sequence spans 550 residues: Chaperonin GroEL (550 aa).

ATP-binding positions include 30-33 (TLGP), Lys-51, 87-91 (DGTTT), Gly-416, 480-482 (NVA), and Asp-496. The disordered stretch occupies residues 525–550 (LPKKDDEGGGGDMGGMGGMGGMGGMM). A compositionally biased stretch (gly residues) spans 534-550 (GGDMGGMGGMGGMGGMM).

Belongs to the chaperonin (HSP60) family. Forms a cylinder of 14 subunits composed of two heptameric rings stacked back-to-back. Interacts with the co-chaperonin GroES.

The protein resides in the cytoplasm. It catalyses the reaction ATP + H2O + a folded polypeptide = ADP + phosphate + an unfolded polypeptide.. Together with its co-chaperonin GroES, plays an essential role in assisting protein folding. The GroEL-GroES system forms a nano-cage that allows encapsulation of the non-native substrate proteins and provides a physical environment optimized to promote and accelerate protein folding. In Halorhodospira halophila (strain DSM 244 / SL1) (Ectothiorhodospira halophila (strain DSM 244 / SL1)), this protein is Chaperonin GroEL.